A 1045-amino-acid polypeptide reads, in one-letter code: Cation efflux system protein CusA (1045 aa).

12 helical membrane passes run 14–34, 336–356, 361–381, 388–408, 444–464, 483–503, 530–550, 869–889, 896–916, 926–946, 983–1003, and 1010–1030; these read FLVLMGALFLSIWGTWTIINT, LSGKLLEEFIVVAVVCALFLW, ALVAIISLPLGLCIAFIVMHF, IMSLGGIAIAVGAMVDAAIVM, VGPALFISLLIITLSFIPIFT, AMAGAALLAIVVIPILMGYWI, VLHWPKTTLLVAALSVLTVLW, KLKLMVPMTLMIIFVLLYLAF, LLIISSVPFALVGGIWLLWWM, TGFIALAGVAAEFGVVMLMYL, AMTVAVIIAGLLPILWGTGAG, and IAAPMIGGMITAPLLSLFIIP.

Belongs to the resistance-nodulation-cell division (RND) (TC 2.A.6) family. The cus efflux system is composed of CusA, CusB, CusC and CusF.

Its subcellular location is the cell inner membrane. Part of a cation efflux system that mediates resistance to copper and silver. The polypeptide is Cation efflux system protein CusA (cusA) (Escherichia coli O157:H7).